Consider the following 968-residue polypeptide: AP2-associated protein kinase 1 (968 aa).

Met-1 carries the post-translational modification N-acetylmethionine. The segment covering Met-1 to Gln-11 has biased composition (basic and acidic residues). The tract at residues Met-1 to Gly-25 is disordered. The segment covering Gly-12–Gly-25 has biased composition (gly residues). Residue Ser-14 is modified to Phosphoserine. The Protein kinase domain occupies Val-46–Leu-315. ATP is bound by residues Leu-52 to Val-60 and Lys-74. Catalysis depends on Asp-176, which acts as the Proton acceptor. The residue at position 234 (Tyr-234) is a Phosphotyrosine. At Ser-235 the chain carries Phosphoserine. Disordered regions lie at residues Ser-327–Pro-485 and Ile-578–Arg-640. 2 positions are modified to phosphothreonine: Thr-354 and Thr-389. Arg-391 is modified (omega-N-methylarginine). The segment covering Gln-437–Ala-448 has biased composition (pro residues). Low complexity-rich tracts occupy residues Pro-449–Gln-472 and Ile-578–Ser-589. The residue at position 613 (Thr-613) is a Phosphothreonine. Position 625 is a phosphoserine (Ser-625). Thr-627 is modified (phosphothreonine). Ser-630, Ser-631, Ser-644, and Ser-657 each carry phosphoserine. Position 660 is a phosphothreonine (Thr-660). The interval Ser-671 to Asp-708 is disordered. Positions Thr-679–Asn-703 are enriched in polar residues. Tyr-694 carries the phosphotyrosine modification. Residues Ser-738, Ser-853, Ser-944, and Ser-945 each carry the phosphoserine modification. A clathrin-binding domain (CBD) region spans residues Glu-830–Asp-967. Disordered regions lie at residues Leu-843–Arg-862 and Pro-929–Leu-952. Residues Leu-851–Arg-862 are compositionally biased toward polar residues. Low complexity predominate over residues Gly-938–Ser-951.

It belongs to the protein kinase superfamily. Ser/Thr protein kinase family. In terms of assembly, interacts (via CBD domain) with clathrin. Interacts with AP-2 complex. Interacts with NUMB. Interacts with alpha-adaptin. Interacts with EPS15. Interacts with membrane-bound activated NOTCH1 but not with the inactive full-length form of NOTCH1. Preferentially interacts with monoubiquitinated activated NOTCH1 compared to the non-ubiquitinated form. Autophosphorylated.

The protein resides in the cell membrane. The protein localises to the membrane. It is found in the clathrin-coated pit. Its subcellular location is the presynapse. The enzyme catalyses L-seryl-[protein] + ATP = O-phospho-L-seryl-[protein] + ADP + H(+). It carries out the reaction L-threonyl-[protein] + ATP = O-phospho-L-threonyl-[protein] + ADP + H(+). Its activity is regulated as follows. Stimulated by clathrin. Its function is as follows. Regulates clathrin-mediated endocytosis by phosphorylating the AP2M1/mu2 subunit of the adaptor protein complex 2 (AP-2) which ensures high affinity binding of AP-2 to cargo membrane proteins during the initial stages of endocytosis. Preferentially, may phosphorylate substrates on threonine residues. Regulates phosphorylation of other AP-2 subunits as well as AP-2 localization and AP-2-mediated internalization of ligand complexes. Phosphorylates NUMB and regulates its cellular localization, promoting NUMB localization to endosomes. Binds to and stabilizes the activated form of NOTCH1, increases its localization in endosomes and regulates its transcriptional activity. This chain is AP2-associated protein kinase 1 (AAK1), found in Sus scrofa (Pig).